The primary structure comprises 375 residues: 23S rRNA (uracil(747)-C(5))-methyltransferase RlmC (375 aa).

Cys-3, Cys-11, Cys-14, and Cys-87 together coordinate [4Fe-4S] cluster. Residues Gln-212, Phe-241, Glu-262, and Asn-307 each coordinate S-adenosyl-L-methionine. Residue Cys-334 is the Nucleophile of the active site.

The protein belongs to the class I-like SAM-binding methyltransferase superfamily. RNA M5U methyltransferase family. RlmC subfamily.

The catalysed reaction is uridine(747) in 23S rRNA + S-adenosyl-L-methionine = 5-methyluridine(747) in 23S rRNA + S-adenosyl-L-homocysteine + H(+). Catalyzes the formation of 5-methyl-uridine at position 747 (m5U747) in 23S rRNA. The sequence is that of 23S rRNA (uracil(747)-C(5))-methyltransferase RlmC from Shigella sonnei (strain Ss046).